The sequence spans 239 residues: Purine nucleoside phosphorylase DeoD-type (239 aa).

Histidine 5 is a binding site for a purine D-ribonucleoside. Residues glycine 21, arginine 25, arginine 44, and 88–91 contribute to the phosphate site; that span reads RVGS. Residues 180 to 182 and 204 to 205 each bind a purine D-ribonucleoside; these read EME and SD. Aspartate 205 (proton donor) is an active-site residue.

This sequence belongs to the PNP/UDP phosphorylase family. As to quaternary structure, homohexamer; trimer of homodimers.

It catalyses the reaction a purine D-ribonucleoside + phosphate = a purine nucleobase + alpha-D-ribose 1-phosphate. The catalysed reaction is a purine 2'-deoxy-D-ribonucleoside + phosphate = a purine nucleobase + 2-deoxy-alpha-D-ribose 1-phosphate. Functionally, catalyzes the reversible phosphorolytic breakdown of the N-glycosidic bond in the beta-(deoxy)ribonucleoside molecules, with the formation of the corresponding free purine bases and pentose-1-phosphate. This Yersinia pestis bv. Antiqua (strain Antiqua) protein is Purine nucleoside phosphorylase DeoD-type.